Reading from the N-terminus, the 383-residue chain is MAEQRPLTIALVAGETSGDILGAGLIRALKARIPNARFVGVAGPLMQAEGCEAWYEMEELAVMGIVEVLGRLRRLLHIRADLTRRFGELRPDVFVGIDAPDFNITLEGNLKKQGIKTIHYVSPSVWAWRQKRVFKIGRSTDLVLAFLPFEKAFYDKFNVPCRFIGHTMADAMPLDPDKGAARDRLGIPHSVRCLALLPGSRGAEVEMLSADFLKTAQLLRATYPDLQVVVPLVNAKRREQFERIKAETAPDMIVHMLDGQARDAMIASDAALLASGTAALECMLAKCPMVVGYRMKPFTFWLAKRLVKTDYVSLPNLLAGRELVKELLQDECEPQALAAALQPLLADGKTSHEMHETFRALHQQIRCNADEQAADAVLELAKQ.

Belongs to the LpxB family.

It catalyses the reaction 2-N,3-O-bis[(3R)-3-hydroxytetradecanoyl]-alpha-D-glucosaminyl 1-phosphate + UDP-2-N,3-O-bis[(3R)-3-hydroxytetradecanoyl]-alpha-D-glucosamine = lipid A disaccharide (E. coli) + UDP + H(+). It carries out the reaction a lipid X + a UDP-2-N,3-O-bis[(3R)-3-hydroxyacyl]-alpha-D-glucosamine = a lipid A disaccharide + UDP + H(+). Its pathway is glycolipid biosynthesis; lipid IV(A) biosynthesis; lipid IV(A) from (3R)-3-hydroxytetradecanoyl-[acyl-carrier-protein] and UDP-N-acetyl-alpha-D-glucosamine: step 5/6. In terms of biological role, condensation of UDP-2,3-diacylglucosamine and 2,3-diacylglucosamine-1-phosphate to form lipid A disaccharide, a precursor of lipid A, a phosphorylated glycolipid that anchors the lipopolysaccharide to the outer membrane of the cell. This Klebsiella pneumoniae subsp. pneumoniae (strain ATCC 700721 / MGH 78578) protein is Lipid-A-disaccharide synthase.